The sequence spans 306 residues: 1-aminocyclopropane-1-carboxylate oxidase (306 aa).

Residues 153–253 (PFFGTKVSHY…RRSIASFYNP (101 aa)) enclose the Fe2OG dioxygenase domain. Fe cation contacts are provided by His-177, Asp-179, and His-234.

It belongs to the iron/ascorbate-dependent oxidoreductase family. Fe cation serves as cofactor.

The enzyme catalyses 1-aminocyclopropane-1-carboxylate + L-ascorbate + O2 = ethene + L-dehydroascorbate + hydrogen cyanide + CO2 + 2 H2O. Its pathway is alkene biosynthesis; ethylene biosynthesis via S-adenosyl-L-methionine; ethylene from S-adenosyl-L-methionine: step 2/2. The protein is 1-aminocyclopropane-1-carboxylate oxidase (MAO1B) of Musa acuminata (Banana).